The primary structure comprises 319 residues: Glycine--tRNA ligase alpha subunit (319 aa).

Belongs to the class-II aminoacyl-tRNA synthetase family. As to quaternary structure, tetramer of two alpha and two beta subunits.

It is found in the cytoplasm. It carries out the reaction tRNA(Gly) + glycine + ATP = glycyl-tRNA(Gly) + AMP + diphosphate. This is Glycine--tRNA ligase alpha subunit from Oenococcus oeni (strain ATCC BAA-331 / PSU-1).